Here is a 690-residue protein sequence, read N- to C-terminus: Elongation factor G (690 aa).

A tr-type G domain is found at 8–283 (EDYRNFGIMA…AVVDYLPSPL (276 aa)). GTP is bound by residues 17-24 (AHIDAGKT), 81-85 (DTPGH), and 135-138 (NKMD).

It belongs to the TRAFAC class translation factor GTPase superfamily. Classic translation factor GTPase family. EF-G/EF-2 subfamily.

It is found in the cytoplasm. Catalyzes the GTP-dependent ribosomal translocation step during translation elongation. During this step, the ribosome changes from the pre-translocational (PRE) to the post-translocational (POST) state as the newly formed A-site-bound peptidyl-tRNA and P-site-bound deacylated tRNA move to the P and E sites, respectively. Catalyzes the coordinated movement of the two tRNA molecules, the mRNA and conformational changes in the ribosome. In Bradyrhizobium sp. (strain BTAi1 / ATCC BAA-1182), this protein is Elongation factor G.